An 83-amino-acid polypeptide reads, in one-letter code: Kunitz serine protease inhibitor Pr-mulgin 3 (83 aa).

An N-terminal signal peptide occupies residues 1–24 (MSSGGLFLLLGLLTLWEVLTPVSS). One can recognise a BPTI/Kunitz inhibitor domain in the interval 31–81 (CELPADSGSCKGNFQAFYYHPVHRTCLEFIYGGCEGNDNNFKTIDECKRTC). 3 cysteine pairs are disulfide-bonded: C31–C81, C40–C64, and C56–C77.

The protein belongs to the venom Kunitz-type family. As to expression, expressed by the venom gland.

It is found in the secreted. Its function is as follows. Serine protease inhibitor that acts against trypsin (EC(50)=10 nM, Ki=5nM), and plasmin (EC(50)=200 nM, Ki=100 nM). The protein is Kunitz serine protease inhibitor Pr-mulgin 3 of Pseudechis rossignolii (Papuan pigmy mulga snake).